Consider the following 304-residue polypeptide: Protein translocase subunit SecF (304 aa).

6 consecutive transmembrane segments (helical) span residues 20–40 (AKLF…LIFT), 143–163 (AMMA…IRFE), 164–184 (LIFA…TLGF), 195–215 (TVVA…IVVF), 244–266 (LSRT…IFGG), and 276–298 (LVIG…VYLI).

It belongs to the SecD/SecF family. SecF subfamily. Forms a complex with SecD. Part of the essential Sec protein translocation apparatus which comprises SecA, SecYEG and auxiliary proteins SecDF. Other proteins may also be involved.

It is found in the cell inner membrane. Functionally, part of the Sec protein translocase complex. Interacts with the SecYEG preprotein conducting channel. SecDF uses the proton motive force (PMF) to complete protein translocation after the ATP-dependent function of SecA. The polypeptide is Protein translocase subunit SecF (Calditerrivibrio nitroreducens (strain DSM 19672 / NBRC 101217 / Yu37-1)).